Reading from the N-terminus, the 151-residue chain is NADH dehydrogenase [ubiquinone] 1 beta subcomplex subunit 11, mitochondrial (151 aa).

A mitochondrion-targeting transit peptide spans 1 to 29 (MAARLLSLYGRCLSAAGAMRGLPAARVRW). A disordered region spans residues 40-62 (GVEKKRQREPTMQWQEDPEPEDE). Residues 87–107 (AVFFFGFSIVLVFGTTFVAYV) form a helical membrane-spanning segment.

The protein belongs to the complex I NDUFB11 subunit family. Complex I is composed of 45 different subunits. Interacts with BCAP31.

It is found in the mitochondrion inner membrane. In terms of biological role, accessory subunit of the mitochondrial membrane respiratory chain NADH dehydrogenase (Complex I), that is believed not to be involved in catalysis. Complex I functions in the transfer of electrons from NADH to the respiratory chain. The immediate electron acceptor for the enzyme is believed to be ubiquinone. The sequence is that of NADH dehydrogenase [ubiquinone] 1 beta subcomplex subunit 11, mitochondrial (Ndufb11) from Mus musculus (Mouse).